Reading from the N-terminus, the 352-residue chain is 4-hydroxy-3-methylbut-2-en-1-yl diphosphate synthase (flavodoxin) (352 aa).

The [4Fe-4S] cluster site is built by Cys-262, Cys-265, Cys-297, and Glu-304.

It belongs to the IspG family. It depends on [4Fe-4S] cluster as a cofactor.

The enzyme catalyses (2E)-4-hydroxy-3-methylbut-2-enyl diphosphate + oxidized [flavodoxin] + H2O + 2 H(+) = 2-C-methyl-D-erythritol 2,4-cyclic diphosphate + reduced [flavodoxin]. The protein operates within isoprenoid biosynthesis; isopentenyl diphosphate biosynthesis via DXP pathway; isopentenyl diphosphate from 1-deoxy-D-xylulose 5-phosphate: step 5/6. Functionally, converts 2C-methyl-D-erythritol 2,4-cyclodiphosphate (ME-2,4cPP) into 1-hydroxy-2-methyl-2-(E)-butenyl 4-diphosphate. The protein is 4-hydroxy-3-methylbut-2-en-1-yl diphosphate synthase (flavodoxin) of Campylobacter curvus (strain 525.92).